The chain runs to 67 residues: DQASMQRASRLLHQCDLRPRDCARRSSERGQGERWRQQLRACDEDSEPRQQCCQNLQRISSQDRCRA.

Belongs to the 2S seed storage albumins family. Heterodimer of a small and a large chain linked by disulfide bonds.

Its subcellular location is the vacuole. It localises to the aleurone grain. Functionally, this is a 2S seed storage protein. The protein is 2S seed storage albumin protein of Matteuccia struthiopteris (European ostrich fern).